The sequence spans 179 residues: MILLPDENWRWVFDEQRQSLLLDLSDDMQFVVSVPPKQLAQKQAFTEHFSLDDSSLYFHFLECLGEFPFTDPERVQIVLNAVAAVKYTRPLVSQSWYYRDVDMLSGEPELGEVFSVVTEFTYGDVMIISPGSNASLCIVISQAIQLDADKSLRQSSVCKLMNSKLLPYQAATQYLSKMA.

Belongs to the ZapC family. In terms of assembly, interacts directly with FtsZ.

It localises to the cytoplasm. Contributes to the efficiency of the cell division process by stabilizing the polymeric form of the cell division protein FtsZ. Acts by promoting interactions between FtsZ protofilaments and suppressing the GTPase activity of FtsZ. This Tolumonas auensis (strain DSM 9187 / NBRC 110442 / TA 4) protein is Cell division protein ZapC.